The primary structure comprises 620 residues: MALLQIAEPGQSAAPHQHRLAVGIDLGTTNSLVAAVRSGETATLPDEDGQHSLPSIVRYTQDTVEVGALAALSSAQDPKNTIVSVKRFMGRSLTDIQTGEQSFPYEFAESENGLPLFVTPQGLVNPVQVSAEILRPLIARAEKTLGGELQGVVITVPAYFDDAQRQGTKDAAALLGVKVLRLLNEPTAAAIAYGLDSKQEGVIAIFDLGGGTFDISVLRLNRGVFEVLATGGDSALGGDDFDHLLQEHMQQVWLLGDIDVQLRRQLLIEARRVKEALTDANETEARIILADGSELKQVVTKRDFDSLISPLVKKTIASCRRTLRDAGVTAEEVLETVMVGGSTRVPLVREQVEAFFGKPPLTSIDPDRVVAIGAAIQADILVGNKPESDLLLLDVIPLSLGIETMGGLVEKVVSRNTTIPVARAQEFTTFKDGQTAMAFHVVQGERELVADCRSLARFTLKGIPPLAAGAAHIRVTFQVDADGLLSVTAMEKSTGVQSSIQVKPSFGLSDTEIATMLKDSMKYAKDDISRRMLAEQQVEAARVLESLHAALAKDGDLLNDDERGQIDATMANVAQLATGDDAEAIKQAIERLDEQTQDFAARRMDNSIRVAFKGQSIDNI.

The protein belongs to the heat shock protein 70 family.

In terms of biological role, chaperone involved in the maturation of iron-sulfur cluster-containing proteins. Has a low intrinsic ATPase activity which is markedly stimulated by HscB. The protein is Chaperone protein HscA homolog of Shewanella putrefaciens (strain CN-32 / ATCC BAA-453).